The following is a 403-amino-acid chain: RUN domain-containing protein 3B (403 aa).

The tract at residues 1–20 (MASRSLGGLSGSRGGGKKSL) is disordered. Arg-13 bears the Omega-N-methylarginine mark. The RUN domain occupies 53–185 (DDSSPEFNNF…IDFSFCLKGE (133 aa)). A disordered region spans residues 207 to 232 (SDSISSDEEELRTFGSSDSEGSTPEN). Ser-211 and Ser-212 each carry phosphoserine. The span at 220 to 231 (FGSSDSEGSTPE) shows a compositional bias: polar residues. Residues 296–321 (AHKLEKEQLEYIIVELQDQLKSYQSL) are a coiled coil.

This sequence belongs to the RUNDC3 family. In terms of assembly, interacts with RAP2A.

This is RUN domain-containing protein 3B (Rundc3b) from Rattus norvegicus (Rat).